We begin with the raw amino-acid sequence, 66 residues long: Large ribosomal subunit protein uL29 (66 aa).

Belongs to the universal ribosomal protein uL29 family.

The protein is Large ribosomal subunit protein uL29 of Thermotoga neapolitana (strain ATCC 49049 / DSM 4359 / NBRC 107923 / NS-E).